Here is a 300-residue protein sequence, read N- to C-terminus: GTPase Era (300 aa).

The Era-type G domain occupies R8 to E176. The segment at G16 to S23 is G1. GTP is bound at residue G16–S23. Positions Q42–H46 are G2. Residues D63–G66 are G3. Residues D63–M67 and N125–D128 each bind GTP. The G4 stretch occupies residues N125 to D128. The tract at residues V155–A157 is G5. The 85-residue stretch at V199–G283 folds into the KH type-2 domain.

Belongs to the TRAFAC class TrmE-Era-EngA-EngB-Septin-like GTPase superfamily. Era GTPase family. Monomer.

It is found in the cytoplasm. The protein resides in the cell inner membrane. Its function is as follows. An essential GTPase that binds both GDP and GTP, with rapid nucleotide exchange. Plays a role in 16S rRNA processing and 30S ribosomal subunit biogenesis and possibly also in cell cycle regulation and energy metabolism. This is GTPase Era from Pseudomonas fluorescens (strain ATCC BAA-477 / NRRL B-23932 / Pf-5).